Reading from the N-terminus, the 289-residue chain is MSTYLIGDIHGCLDELLALLAQVNFDPQQDTLWLTGDLVARGPASLDVLRYVRSLGPAVRMVLGNHDLHLLAVYAGISRNKPKDRITPLLDAPDADELINWLRRQPVLQVDDQLKLIMAHAGITPQWDIETAQMCAREVEAVLSSDSYPLFLDAMYGDMPNNWSPELTGLARLRFSTNALTRMRFCFPNGQLDMICKDTPENAPAPLKPWFDLPRLVDPEYSIIFGHWASLEGKGVPEGIYGLDTGCCWGGDLTLLRWEDKRYFTQRAFKAEAEINNNNGFAAGEEVQH.

It belongs to the Ap4A hydrolase family.

It catalyses the reaction P(1),P(4)-bis(5'-adenosyl) tetraphosphate + H2O = 2 ADP + 2 H(+). Functionally, hydrolyzes diadenosine 5',5'''-P1,P4-tetraphosphate to yield ADP. The chain is Bis(5'-nucleosyl)-tetraphosphatase, symmetrical from Yersinia pseudotuberculosis serotype O:3 (strain YPIII).